Here is a 158-residue protein sequence, read N- to C-terminus: 6,7-dimethyl-8-ribityllumazine synthase (158 aa).

Residues phenylalanine 22, 57–59, and 84–86 each bind 5-amino-6-(D-ribitylamino)uracil; these read AYE and TVI. 89-90 provides a ligand contact to (2S)-2-hydroxy-3-oxobutyl phosphate; that stretch reads GT. Histidine 92 serves as the catalytic Proton donor. Phenylalanine 117 is a binding site for 5-amino-6-(D-ribitylamino)uracil. Arginine 131 contacts (2S)-2-hydroxy-3-oxobutyl phosphate.

It belongs to the DMRL synthase family. In terms of assembly, forms an icosahedral capsid composed of 60 subunits, arranged as a dodecamer of pentamers.

It catalyses the reaction (2S)-2-hydroxy-3-oxobutyl phosphate + 5-amino-6-(D-ribitylamino)uracil = 6,7-dimethyl-8-(1-D-ribityl)lumazine + phosphate + 2 H2O + H(+). It functions in the pathway cofactor biosynthesis; riboflavin biosynthesis; riboflavin from 2-hydroxy-3-oxobutyl phosphate and 5-amino-6-(D-ribitylamino)uracil: step 1/2. In terms of biological role, catalyzes the formation of 6,7-dimethyl-8-ribityllumazine by condensation of 5-amino-6-(D-ribitylamino)uracil with 3,4-dihydroxy-2-butanone 4-phosphate. This is the penultimate step in the biosynthesis of riboflavin. This chain is 6,7-dimethyl-8-ribityllumazine synthase, found in Pectobacterium atrosepticum (strain SCRI 1043 / ATCC BAA-672) (Erwinia carotovora subsp. atroseptica).